A 236-amino-acid polypeptide reads, in one-letter code: Bax inhibitor 1 (236 aa).

Residues 1–29 are Cytoplasmic-facing; it reads MNIFDRKINFDALFKFSHITPSTQQHLKK. Lys7 is covalently cross-linked (Glycyl lysine isopeptide (Lys-Gly) (interchain with G-Cter in ubiquitin)). A helical membrane pass occupies residues 30–50; it reads VYASFALCMFVAAAGAYIHVV. The Lumenal portion of the chain corresponds to 51-52; that stretch reads TH. Residues 53–73 traverse the membrane as a helical segment; sequence FIQAGLLSALGSLGLMIWLMA. Topologically, residues 74–86 are cytoplasmic; sequence TPHSHETEQKRLG. A helical membrane pass occupies residues 87-107; sequence LLAGFAFLTGVGLGPALDLCI. Residues 108–112 lie on the Lumenal side of the membrane; the sequence is AINPS. The chain crosses the membrane as a helical span at residues 113-133; that stretch reads ILPTAFMGTAMIFTCFTLSAL. Residues 134–139 lie on the Cytoplasmic side of the membrane; that stretch reads YARRRS. Residues 140-160 traverse the membrane as a helical segment; it reads YLFLGGILMSAMSLMLLSSLG. The Lumenal portion of the chain corresponds to 161–166; sequence NLFFGS. Residues 167–187 form a helical membrane-spanning segment; the sequence is VWLFQANLYMGLVVMCGFVLF. The Cytoplasmic segment spans residues 188-206; sequence DTQLIIEKAENGDKDYIWH. The helical intramembrane region spans 207–227; that stretch reads CVDLFLDFVTLFRKLMMILAM. The Cytoplasmic segment spans residues 228–236; sequence NEKDKKKKK.

This sequence belongs to the BI1 family. As to quaternary structure, interacts with BCL2 and BCL2L1. Interacts with ERN1. Post-translationally, ubiquitinated by BFAR, leading to proteasomal degradation.

It localises to the endoplasmic reticulum membrane. Its function is as follows. Endoplasmic reticulum (ER)-resident protein that confers cellular protection as an anti-apoptotic protein by limiting multiple stress-inducing pathways surrounding the endoplasmic reticulum and mitochondria. Inhibits the activities of the key sensor for the endoplasmic reticulum unfolded protein response IRE1alpha/ERN1 both directly and by blocking BAX/BAK binding. Modulates ER calcium homeostasis by acting as a calcium-leak channel. Negatively regulates autophagy and autophagosome formation, especially during periods of nutrient deprivation, and reduces cell survival during starvation. The polypeptide is Bax inhibitor 1 (TMBIM6) (Bos taurus (Bovine)).